The primary structure comprises 576 residues: Sodium/proton antiporter 1 (576 aa).

The transit peptide at 1 to 60 (MAVFPIGSHFAPPHQLTKRHVIATSSPISISTRLPQNVSFSKVSGVTGSTRLSKHGVLVR) directs the protein to the chloroplast. 9 helical membrane passes run 237–257 (TLLW…DNLT), 279–299 (LGGV…IGDV), 320–340 (FLPS…TSEV), 357–377 (APRG…VPVF), 379–399 (ALTG…LWIL), 426–446 (GALF…AGIL), 462–482 (LIAS…LVAA), 501–521 (LIAF…AAGV), and 541–561 (FAFA…NLHF).

The protein belongs to the NhaD Na(+)/H(+) (TC 2.A.62) antiporter family. Mostly expressed in mature and senescent leaves, and, to a lower extent, in seeds, roots, shoots, flowers and developing siliques.

The protein resides in the plastid. It localises to the chloroplast membrane. Its subcellular location is the chloroplast envelope. Its function is as follows. Na(+)/H(+) antiporter that extrudes sodium in exchange for external protons. The polypeptide is Sodium/proton antiporter 1 (Arabidopsis thaliana (Mouse-ear cress)).